Here is a 179-residue protein sequence, read N- to C-terminus: Large ribosomal subunit protein uL5 (179 aa).

Belongs to the universal ribosomal protein uL5 family. As to quaternary structure, part of the 50S ribosomal subunit; part of the 5S rRNA/L5/L18/L25 subcomplex. Contacts the 5S rRNA and the P site tRNA. Forms a bridge to the 30S subunit in the 70S ribosome.

This is one of the proteins that bind and probably mediate the attachment of the 5S RNA into the large ribosomal subunit, where it forms part of the central protuberance. In the 70S ribosome it contacts protein S13 of the 30S subunit (bridge B1b), connecting the 2 subunits; this bridge is implicated in subunit movement. Contacts the P site tRNA; the 5S rRNA and some of its associated proteins might help stabilize positioning of ribosome-bound tRNAs. The sequence is that of Large ribosomal subunit protein uL5 from Alcanivorax borkumensis (strain ATCC 700651 / DSM 11573 / NCIMB 13689 / SK2).